The sequence spans 1091 residues: Neural cell adhesion molecule 1 (1091 aa).

Residues 1–19 form the signal peptide; that stretch reads MLPAAALPWTLFFLGAAAS. Ig-like C2-type domains are found at residues 20-113, 116-205, 212-301, 308-403, and 406-495; these read LQVD…VNVK, QKLM…KDIQ, PSVR…ATIH, PKIT…LEVQ, and PKLQ…FILV. The Extracellular segment spans residues 20–711; sequence LQVDIVPSQG…STSPTSGLGT (692 aa). Intrachain disulfides connect C41/C96 and C139/C189. Heparin-binding positions include 152-156 and 161-165; these read KHKGR and KKDVR. N-linked (GlcNAc...) asparagine glycosylation is present at N222. Residues C235 and C287 are joined by a disulfide bond. N-linked (GlcNAc...) asparagine glycosylation is found at N315, N347, N423, N449, and N478. C329 and C385 are oxidised to a cystine. Residues C426 and C479 are joined by a disulfide bond. Fibronectin type-III domains lie at 499–598 and 600–696; these read TPSS…TQPV and EPSA…SAQP. A helical membrane pass occupies residues 712–729; sequence AAIVGILIVIFVLLLVAV. Over 730–1091 the chain is Cytoplasmic; that stretch reads DVTCYFLNKC…ATEIRHLQQK (362 aa). Disordered stretches follow at residues 756-809, 840-916, 937-1023, and 1041-1091; these read GAKG…TEPE, ATAQ…NNLS, ETSK…GTFK, and TPAS…LQQK. A compositionally biased stretch (basic and acidic residues) spans 758–799; that stretch reads KGKDMEEGKAAFSKDESKEPIVEVRTEEERTPNHDGGKHTEP. Residues 845 to 856 show a composition bias toward low complexity; that stretch reads SPTSETTTLTSS. 2 stretches are compositionally biased toward polar residues: residues 904–916 and 980–1012; these read DTPS…NNLS and QPST…PSQN. Basic and acidic residues-rich tracts occupy residues 1013 to 1023 and 1068 to 1091; these read EDFKMDEGTFK and KTEK…LQQK.

Post-translationally, polysialylated by ST8SIA2 and ST8SIA4. Polysialylation modulates cell interactions by confering both attractive and repulsive properties that are highly regulated by ST8SIA2 and ST8SIA4. Polysialylation is formed on a-2,3-linked sialic acid of core glycans.

It is found in the cell membrane. Functionally, this protein is a cell adhesion molecule involved in neuron-neuron adhesion, neurite fasciculation, outgrowth of neurites, etc. In Gallus gallus (Chicken), this protein is Neural cell adhesion molecule 1.